We begin with the raw amino-acid sequence, 830 residues long: AdoMet-dependent rRNA methyltransferase SPB1 (830 aa).

S-adenosyl-L-methionine is bound by residues Gly-58, Trp-60, Asp-78, Asp-94, and Asp-119. Catalysis depends on Lys-159, which acts as the Proton acceptor. Positions 345–388 (LTEEEQIEKELQEMQQKQNLKKKREKRKQNEIKQKEITRMQMQM) form a coiled coil. 2 disordered regions span residues 485–529 (AKEA…SDSD) and 565–642 (EADL…AREV). 3 stretches are compositionally biased toward acidic residues: residues 516–529 (VDDD…SDSD), 591–610 (VSEE…DSDF), and 618–630 (DESD…EDEA). Basic and acidic residues predominate over residues 631–642 (ERSQKEKHAREV).

This sequence belongs to the class I-like SAM-binding methyltransferase superfamily. RNA methyltransferase RlmE family. SPB1 subfamily. In terms of assembly, component of the nucleolar and nucleoplasmic pre-60S ribosomal particle.

The protein localises to the nucleus. It localises to the nucleolus. The catalysed reaction is a ribonucleotide in rRNA + S-adenosyl-L-methionine = a 2'-O-methylribonucleotide in rRNA + S-adenosyl-L-homocysteine + H(+). Required for proper assembly of pre-ribosomal particles during the biogenesis of the 60S ribosomal subunit. This is AdoMet-dependent rRNA methyltransferase SPB1 from Eremothecium gossypii (strain ATCC 10895 / CBS 109.51 / FGSC 9923 / NRRL Y-1056) (Yeast).